Consider the following 605-residue polypeptide: uncharacterized protein (605 aa).

Residues 56 to 78 traverse the membrane as a helical segment; sequence ILWSSIAAACVILFAAYKTGAYF.

The protein resides in the cell membrane. This is an uncharacterized protein from Bacillus subtilis (strain 168).